Here is a 770-residue protein sequence, read N- to C-terminus: 1,4-alpha-glucan branching enzyme GlgB (770 aa).

Catalysis depends on D437, which acts as the Nucleophile. E488 (proton donor) is an active-site residue.

Belongs to the glycosyl hydrolase 13 family. GlgB subfamily. As to quaternary structure, monomer.

The catalysed reaction is Transfers a segment of a (1-&gt;4)-alpha-D-glucan chain to a primary hydroxy group in a similar glucan chain.. The protein operates within glycan biosynthesis; glycogen biosynthesis. Its function is as follows. Catalyzes the formation of the alpha-1,6-glucosidic linkages in glycogen by scission of a 1,4-alpha-linked oligosaccharide from growing alpha-1,4-glucan chains and the subsequent attachment of the oligosaccharide to the alpha-1,6 position. The chain is 1,4-alpha-glucan branching enzyme GlgB from Synechococcus sp. (strain JA-3-3Ab) (Cyanobacteria bacterium Yellowstone A-Prime).